Reading from the N-terminus, the 451-residue chain is Glutamyl-tRNA reductase (451 aa).

Substrate-binding positions include 47 to 50, serine 132, 137 to 139, and glutamine 143; these read TCNR and EPQ. Cysteine 48 serves as the catalytic Nucleophile. 212 to 217 is an NADP(+) binding site; sequence AAGEMN.

Belongs to the glutamyl-tRNA reductase family. As to quaternary structure, homodimer.

The enzyme catalyses (S)-4-amino-5-oxopentanoate + tRNA(Glu) + NADP(+) = L-glutamyl-tRNA(Glu) + NADPH + H(+). The protein operates within porphyrin-containing compound metabolism; protoporphyrin-IX biosynthesis; 5-aminolevulinate from L-glutamyl-tRNA(Glu): step 1/2. Catalyzes the NADPH-dependent reduction of glutamyl-tRNA(Glu) to glutamate 1-semialdehyde (GSA). The sequence is that of Glutamyl-tRNA reductase from Psychrobacter sp. (strain PRwf-1).